The sequence spans 475 residues: Proton-coupled amino acid transporter 1 (475 aa).

Positions 1–15 (MSTQRLRNEDYHDYS) are enriched in basic and acidic residues. The tract at residues 1–32 (MSTQRLRNEDYHDYSSTDVSPEESPSEGLGSF) is disordered. Residues 1-50 (MSTQRLRNEDYHDYSSTDVSPEESPSEGLGSFSPGSYQRLGENSSMTWFQ) are Cytoplasmic-facing. A helical transmembrane segment spans residues 51–71 (TLIHLLKGNIGTGLLGLPLAV). Over 72–77 (KNAGLL) the chain is Extracellular. A helical membrane pass occupies residues 78 to 98 (LGPLSLLVIGIVAVHCMGILV). Topologically, residues 99–140 (KCAHHLCRRLNKPFLDYGDTVMYGLECSPSTWIRNHSHWGRR) are cytoplasmic. The helical transmembrane segment at 141–161 (IVDFFLVVTQLGFCCVYFVFL) threads the bilayer. Residues 162 to 189 (ADNFKQVIEAANGTTTNCNNNETVILTP) are Extracellular-facing. N-linked (GlcNAc...) asparagine glycans are attached at residues N173 and N182. C179 and C328 are joined by a disulfide. Residues 190–210 (TMDSRLYMLTFLPFLVLLSFI) traverse the membrane as a helical segment. At 211–214 (RNLR) the chain is on the cytoplasmic side. A helical transmembrane segment spans residues 215–235 (ILSIFSLLANISMFVSLIMIY). At 236–256 (QFIVQRIPDPSHLPLVAPWKT) the chain is on the extracellular side. Residues 257–277 (YPLFFGTAIFAFEGIGVVLPL) traverse the membrane as a helical segment. Over 278-288 (ENKMKDSQKFP) the chain is Cytoplasmic. A helical membrane pass occupies residues 289-309 (LILYLGMAIITVLYISLGSLG). The Extracellular portion of the chain corresponds to 310–341 (YLQFGADIKGSITLNLPNCWLYQSVKLLYSIG). The helical transmembrane segment at 342–362 (IFFTYALQFYVAAEIIIPAIV) threads the bilayer. At 363 to 371 (SRVPERFEL) the chain is on the cytoplasmic side. The helical transmembrane segment at 372–392 (VVDLSARTAMVCVTCVLAVLI) threads the bilayer. Over 393–396 (PRLD) the chain is Extracellular. The chain crosses the membrane as a helical span at residues 397–417 (LVISLVGSVSSSALALIIPPL). Residues 418 to 438 (LEVTTYYGEGISPLTITKDAL) are Cytoplasmic-facing. Residues 439–459 (ISILGFVGFVVGTYESLWELI) form a helical membrane-spanning segment. Residues 460 to 475 (QPSHSDSSTNSTSAFI) are Extracellular-facing. N469 carries N-linked (GlcNAc...) asparagine glycosylation.

It belongs to the amino acid/polyamine transporter 2 family. As to expression, widely expressed and predominantly expressed in brain. Within the brain, expression restricted to neurons and not detected in glial cells. Abundant in regions rich in neurons using glutamate and GABA such as Purkinje cells in the cerebellum and pyramidal cells in the hippocampus.

It localises to the cell membrane. The protein resides in the apical cell membrane. It is found in the lysosome membrane. The catalysed reaction is glycine(in) + H(+)(in) = glycine(out) + H(+)(out). It carries out the reaction L-proline(out) + H(+)(out) = L-proline(in) + H(+)(in). It catalyses the reaction D-proline(out) + H(+)(out) = D-proline(in) + H(+)(in). The enzyme catalyses L-alanine(in) + H(+)(in) = L-alanine(out) + H(+)(out). The catalysed reaction is D-alanine(in) + H(+)(in) = D-alanine(out) + H(+)(out). It carries out the reaction L-serine(in) + H(+)(in) = L-serine(out) + H(+)(out). It catalyses the reaction D-serine(out) + H(+)(out) = D-serine(in) + H(+)(in). The enzyme catalyses 4-aminobutanoate(in) + H(+)(in) = 4-aminobutanoate(out) + H(+)(out). The catalysed reaction is beta-alanine(in) + H(+)(in) = beta-alanine(out) + H(+)(out). In terms of biological role, electrogenic proton/amino acid symporter with selectivity for small apolar L-amino acids, their D-enantiomers and selected amino acid derivatives such as 4-aminobutanoate/GABA. May be involved in the efflux from the lysosomal compartment of neutral amino acids resulting from proteolysis. May play a role in specifying sites for exocytosis in neurons. This chain is Proton-coupled amino acid transporter 1, found in Rattus norvegicus (Rat).